A 446-amino-acid chain; its full sequence is ATP-dependent protease ATPase subunit HslU (446 aa).

Residues Val-18, 60–65 (GVGKTE), Asp-259, Glu-324, and Arg-396 each bind ATP.

Belongs to the ClpX chaperone family. HslU subfamily. In terms of assembly, a double ring-shaped homohexamer of HslV is capped on each side by a ring-shaped HslU homohexamer. The assembly of the HslU/HslV complex is dependent on binding of ATP.

The protein resides in the cytoplasm. Its function is as follows. ATPase subunit of a proteasome-like degradation complex; this subunit has chaperone activity. The binding of ATP and its subsequent hydrolysis by HslU are essential for unfolding of protein substrates subsequently hydrolyzed by HslV. HslU recognizes the N-terminal part of its protein substrates and unfolds these before they are guided to HslV for hydrolysis. The polypeptide is ATP-dependent protease ATPase subunit HslU (Acidovorax ebreus (strain TPSY) (Diaphorobacter sp. (strain TPSY))).